Here is a 206-residue protein sequence, read N- to C-terminus: uncharacterized protein (206 aa).

This is an uncharacterized protein from Haemophilus influenzae (strain ATCC 51907 / DSM 11121 / KW20 / Rd).